The primary structure comprises 255 residues: tRNA uridine(34) hydroxylase (255 aa).

The 95-residue stretch at 125 to 219 (AAPDTLLIDT…YLEGIPESES (95 aa)) folds into the Rhodanese domain. The active-site Cysteine persulfide intermediate is Cys-179.

It belongs to the TrhO family.

It carries out the reaction uridine(34) in tRNA + AH2 + O2 = 5-hydroxyuridine(34) in tRNA + A + H2O. In terms of biological role, catalyzes oxygen-dependent 5-hydroxyuridine (ho5U) modification at position 34 in tRNAs. The polypeptide is tRNA uridine(34) hydroxylase (Nitrobacter hamburgensis (strain DSM 10229 / NCIMB 13809 / X14)).